The sequence spans 183 residues: Protein jagunal homolog 1 (183 aa).

At 1 to 39 the chain is on the cytoplasmic side; it reads MASRAGPRAAGTDGSDFQHRERVAMHYQMSVTLKYEIKK. A Phosphoserine modification is found at serine 3. Residues 40–60 traverse the membrane as a helical segment; it reads LIYVHLVIWLLLVAKMSVGHL. Over 61–71 the chain is Lumenal; that stretch reads RLLSHDQVAMP. Residues 72–92 traverse the membrane as a helical segment; sequence YQWEYPYLLSIVPSVLGLLSF. At 93–96 the chain is on the cytoplasmic side; it reads PRNN. A helical transmembrane segment spans residues 97-117; sequence ISYLVLSMISMGLFSIAPLIY. The Lumenal segment spans residues 118–137; sequence GSMEMFPAAQQLYRHGKAYR. A helical transmembrane segment spans residues 138–158; sequence FLFGFSAVSVMYLVLVLAVQV. At 159-183 the chain is on the cytoplasmic side; it reads HAWQLYYSKKLLDSWFTSTQEKKRK.

Belongs to the jagunal family. As to quaternary structure, interacts with COPA, COPB2 and COPG2.

It localises to the endoplasmic reticulum membrane. Its function is as follows. Endoplasmic reticulum transmembrane protein involved in vesicle-mediated transport, which is required for neutrophil function. Required for vesicle-mediated transport; it is however unclear whether it is involved in early secretory pathway or intracellular protein transport. Acts as a regulator of neutrophil function, probably via its role in vesicle-mediated transport: required for defense against fungal pathogens and for granulocyte colony-stimulating factor (GM-CSF) signaling pathway; possibly by regulating glycosylation and/or targeting of proteins contributing to the viability and migration of neutrophils. The protein is Protein jagunal homolog 1 of Mus musculus (Mouse).